Here is a 480-residue protein sequence, read N- to C-terminus: Probable G-protein coupled receptor Mth-like 6 (480 aa).

The N-terminal stretch at 1–20 is a signal peptide; that stretch reads MLLNILAIILVFVISSQSEA. Residues 21 to 202 are Extracellular-facing; sequence VIPGCDYFDT…LEHVYIPKSM (182 aa). 4 disulfides stabilise this stretch: cysteine 25–cysteine 78, cysteine 80–cysteine 85, cysteine 89–cysteine 179, and cysteine 90–cysteine 101. Asparagine 40 carries an N-linked (GlcNAc...) asparagine glycan. Residues asparagine 160 and asparagine 170 are each glycosylated (N-linked (GlcNAc...) asparagine). The helical transmembrane segment at 203–225 threads the bilayer; sequence PAVPQVGTISMVGCILTIAVYLY. Over 226–231 the chain is Cytoplasmic; the sequence is IKKLRN. Residues 232-254 form a helical membrane-spanning segment; sequence LLGKCFICYVFCKFVQYLIWAGG. Over 255 to 263 the chain is Extracellular; that stretch reads DLNLWNNIC. The chain crosses the membrane as a helical span at residues 264-283; that stretch reads SLAGYTNYFFALASHFWLSV. Residues 284-303 lie on the Cytoplasmic side of the membrane; sequence MSHQIWKNLRLINRDERSYH. A helical transmembrane segment spans residues 304-326; the sequence is FLIYNIYGWGTPAIMTAITYLVD. At 327 to 356 the chain is on the extracellular side; sequence WAWEDRPDKLNWIPGVGLYRCWINTYDWSA. The chain crosses the membrane as a helical span at residues 357-379; it reads MIYLYGPMLILSLFNVVTFILTV. Over 380–405 the chain is Cytoplasmic; sequence NHIMKIKSSVKSSTQQQRKCIQNNDF. A helical transmembrane segment spans residues 406–428; that stretch reads LLYLRLSVMMGVTGISEVITYFV. At 429–437 the chain is on the extracellular side; it reads KRHKFWRQV. A helical membrane pass occupies residues 438–457; it reads LRVPNFFHLGSGIVVFVLFI. The Cytoplasmic portion of the chain corresponds to 458–480; sequence LKRSTFQMIMERISGPRRQQPAS.

It belongs to the G-protein coupled receptor 2 family. Mth subfamily.

The protein localises to the cell membrane. The polypeptide is Probable G-protein coupled receptor Mth-like 6 (mthl6) (Drosophila melanogaster (Fruit fly)).